The sequence spans 83 residues: Mu-theraphotoxin-Hhn2g (83 aa).

Residues 1–21 (MKASMYLALAGLVLLFVVGYA) form the signal peptide. Positions 22 to 48 (SESEEKEFPRELLSKIFAVDDFKGEER) are excised as a propeptide. Disulfide bonds link C50-C65 and C57-C70. The residue at position 81 (L81) is a Leucine amide.

Belongs to the neurotoxin 10 (Hwtx-1) family. 15 (Hntx-3) subfamily. Monomer. As to expression, expressed by the venom gland.

The protein localises to the secreted. Functionally, lethal neurotoxin. Selectively blocks tetrodotoxin-sensitive voltage-gated sodium channels (Nav). Does not affect tetrodotoxin-resistant voltage-gated sodium channels or calcium channels. This is Mu-theraphotoxin-Hhn2g from Cyriopagopus hainanus (Chinese bird spider).